Reading from the N-terminus, the 88-residue chain is Sec-independent protein translocase protein TatA (88 aa).

The helical transmembrane segment at 1 to 21 (MGGASIWHWIVVGVIVMLLFG) threads the bilayer. The segment at 62 to 88 (TEPVRTLPPHPTEPAPATHATVDRKVV) is disordered.

This sequence belongs to the TatA/E family. In terms of assembly, the Tat system comprises two distinct complexes: a TatABC complex, containing multiple copies of TatA, TatB and TatC subunits, and a separate TatA complex, containing only TatA subunits. Substrates initially bind to the TatABC complex, which probably triggers association of the separate TatA complex to form the active translocon.

It is found in the cell inner membrane. In terms of biological role, part of the twin-arginine translocation (Tat) system that transports large folded proteins containing a characteristic twin-arginine motif in their signal peptide across membranes. TatA could form the protein-conducting channel of the Tat system. The sequence is that of Sec-independent protein translocase protein TatA from Methylobacterium sp. (strain 4-46).